The primary structure comprises 961 residues: Integrator complex subunit 7 (961 aa).

A compositionally biased stretch (low complexity) spans 937–955 (QVRLQQQQGQPPSQQQQQR). The tract at residues 937–961 (QVRLQQQQGQPPSQQQQQRTAYSRF) is disordered.

It belongs to the Integrator subunit 7 family. In terms of assembly, component of the Integrator complex, composed of core subunits INTS1, INTS2, INTS3, INTS4, INTS5, INTS6, INTS7, INTS8, INTS9/RC74, INTS10, INTS11/CPSF3L, INTS12, INTS13, INTS14 and INTS15. The core complex associates with protein phosphatase 2A subunits PPP2CA and PPP2R1A, to form the Integrator-PP2A (INTAC) complex.

Its subcellular location is the nucleus. It localises to the chromosome. The protein resides in the cytoplasm. Its function is as follows. Component of the integrator complex, a multiprotein complex that terminates RNA polymerase II (Pol II) transcription in the promoter-proximal region of genes. The integrator complex provides a quality checkpoint during transcription elongation by driving premature transcription termination of transcripts that are unfavorably configured for transcriptional elongation: the complex terminates transcription by (1) catalyzing dephosphorylation of the C-terminal domain (CTD) of Pol II subunit POLR2A/RPB1 and SUPT5H/SPT5, (2) degrading the exiting nascent RNA transcript via endonuclease activity and (3) promoting the release of Pol II from bound DNA. The integrator complex is also involved in terminating the synthesis of non-coding Pol II transcripts, such as enhancer RNAs (eRNAs), small nuclear RNAs (snRNAs), telomerase RNAs and long non-coding RNAs (lncRNAs). The protein is Integrator complex subunit 7 (INTS7) of Gallus gallus (Chicken).